Here is a 138-residue protein sequence, read N- to C-terminus: MRTFWIVALLLVGVEGNLLQFNKMIKMMTKKNAFPFYTSYGCYCGWGGRGRPKDATDRCCFVHDCCYEKLTNCSPKTDIYSYSWKRGVIICGKGTPCEKQICECDRAAAVCFRENLPTYKKRYMFYLDFLCTDPSEKC.

An N-terminal signal peptide occupies residues 1-16 (MRTFWIVALLLVGVEG). 7 disulfides stabilise this stretch: cysteine 42-cysteine 131, cysteine 44-cysteine 60, cysteine 59-cysteine 111, cysteine 65-cysteine 138, cysteine 66-cysteine 104, cysteine 73-cysteine 97, and cysteine 91-cysteine 102. Positions 43, 45, and 47 each coordinate Ca(2+). Residue histidine 63 is part of the active site. Position 64 (aspartate 64) interacts with Ca(2+). Aspartate 105 is an active-site residue.

It belongs to the phospholipase A2 family. Group II subfamily. D49 sub-subfamily. Monomer. Binds to calmodulin. Ca(2+) is required as a cofactor. Expressed by the venom gland.

It localises to the secreted. The enzyme catalyses a 1,2-diacyl-sn-glycero-3-phosphocholine + H2O = a 1-acyl-sn-glycero-3-phosphocholine + a fatty acid + H(+). Its activity is regulated as follows. Heparin and wedelolactone inhibit the myotoxic activity. The PLA2 inhibitor, para-bromophenacyl bromide (BPB), inhibits enzymatic and myotoxic activities. In terms of biological role, snake venom phospholipase A2 (PLA2) that is myotoxic and displays moderate edema-inducing activity in rat paws. Does not show neurotoxic activity. PLA2 catalyzes the calcium-dependent hydrolysis of the 2-acyl groups in 3-sn-phosphoglycerides. This is Basic phospholipase A2 Cvv-N6 from Crotalus viridis viridis (Prairie rattlesnake).